Consider the following 446-residue polypeptide: Tubulin beta-2 chain (446 aa).

8 residues coordinate GTP: glutamine 11, glutamate 69, serine 138, glycine 142, threonine 143, glycine 144, asparagine 204, and asparagine 226. Glutamate 69 provides a ligand contact to Mg(2+). The disordered stretch occupies residues 426-446 (QEAGIDEEEEYEEEAPAEHEE). Residues 429–440 (GIDEEEEYEEEA) show a composition bias toward acidic residues.

The protein belongs to the tubulin family. In terms of assembly, dimer of alpha and beta chains. A typical microtubule is a hollow water-filled tube with an outer diameter of 25 nm and an inner diameter of 15 nM. Alpha-beta heterodimers associate head-to-tail to form protofilaments running lengthwise along the microtubule wall with the beta-tubulin subunit facing the microtubule plus end conferring a structural polarity. Microtubules usually have 13 protofilaments but different protofilament numbers can be found in some organisms and specialized cells. It depends on Mg(2+) as a cofactor.

It localises to the cytoplasm. The protein localises to the cytoskeleton. Its function is as follows. Tubulin is the major constituent of microtubules, a cylinder consisting of laterally associated linear protofilaments composed of alpha- and beta-tubulin heterodimers. Microtubules grow by the addition of GTP-tubulin dimers to the microtubule end, where a stabilizing cap forms. Below the cap, tubulin dimers are in GDP-bound state, owing to GTPase activity of alpha-tubulin. This chain is Tubulin beta-2 chain, found in Hypocrea virens (Gliocladium virens).